A 2343-amino-acid polypeptide reads, in one-letter code: Coagulation factor VIII (2343 aa).

A signal peptide spans 1–19 (MQVELYTCCFLCLLPFSLS). Plastocyanin-like domains follow at residues 20–199 (ATRK…LLVC) and 207–343 (ERTQ…VDSC). The region spanning 20–343 (ATRKYYLGAV…MEAYVKVDSC (324 aa)) is the F5/8 type A 1 domain. N-linked (GlcNAc...) asparagine glycosylation is found at N233 and N253. Sulfotyrosine is present on residues Y359 and Y408. Plastocyanin-like domains lie at 393-567 (KTWV…LLIC) and 577-724 (NQMM…VSSC). Positions 393-724 (KTWVHYIAAE…MTALLKVSSC (332 aa)) constitute an F5/8 type A 2 domain. N595 carries an N-linked (GlcNAc...) asparagine glycan. Sulfotyrosine is present on residues Y731, Y732, and Y736. Polar residues predominate over residues 752–761 (PRSFSQNSRH). Disordered regions lie at residues 752–774 (PRSF…ATTT) and 828–865 (ADDH…PEPE). The tract at residues 754–1659 (SFSQNSRHPS…NPPVSKHHQR (906 aa)) is b. Composition is skewed to basic and acidic residues over residues 828-841 (ADDH…RNKG) and 850-861 (PELRHSEDREFT). 11 N-linked (GlcNAc...) asparagine glycosylation sites follow: N877, N921, N937, N938, N956, N1007, N1019, N1037, N1062, N1069, and N1080. Residues 1124–1147 (GKNSLSSEQRPSPKQLTSLGSEKS) form a disordered region. Residues 1125 to 1147 (KNSLSSEQRPSPKQLTSLGSEKS) show a composition bias toward polar residues. N1179, N1193, N1275, N1290, N1308, N1341, N1391, N1419, N1429, N1453, N1547, and N1618 each carry an N-linked (GlcNAc...) asparagine glycan. Polar residues predominate over residues 1302–1314 (TTRMSSNASQHVI). The disordered stretch occupies residues 1302–1326 (TTRMSSNASQHVITQRGKRSLKQPR). The interval 1592 to 1632 (KSQKKSQTNTAFKRKDTILPLGPCENNDSTAAINEGQDKPQ) is disordered. Residues Y1675 and Y1691 each carry the sulfotyrosine modification. 2 consecutive Plastocyanin-like domains span residues 1705-1869 (KTRH…LLIC) and 1879-2032 (GRQV…SKKC). The F5/8 type A 3 domain occupies 1705–2032 (KTRHYFIAAV…TLFLVYSKKC (328 aa)). The N-linked (GlcNAc...) asparagine glycan is linked to N1821. 2 F5/8 type C domains span residues 2032–2180 (CQTP…LLGC) and 2185–2337 (CSMP…VLGC). Cystine bridges form between C2032–C2180 and C2185–C2337. Residues N2129 and N2281 are each glycosylated (N-linked (GlcNAc...) asparagine).

It belongs to the multicopper oxidase family. Interacts with vWF. vWF binding is essential for the stabilization of F8 in circulation. Proteolytically cleaved by cathepsin CTSG to produce a partially activated form.

The protein localises to the secreted. It is found in the extracellular space. Its function is as follows. Factor VIII, along with calcium and phospholipid, acts as a cofactor for factor IXa when it converts factor X to the activated form, factor Xa. The polypeptide is Coagulation factor VIII (F8) (Canis lupus familiaris (Dog)).